A 226-amino-acid chain; its full sequence is Gap junction beta-2 protein (226 aa).

Over 1 to 20 the chain is Cytoplasmic; the sequence is MDWGGLHTILGGVNKHSTSI. A helical transmembrane segment spans residues 21 to 40; sequence GKIWLTVLFIFRIMILVVAA. The Extracellular portion of the chain corresponds to 41 to 75; sequence KEVWGDEQADFVCNTLQPGCKNVCYDHYFPISHIR. Disulfide bonds link cysteine 53–cysteine 180, cysteine 60–cysteine 174, and cysteine 64–cysteine 169. Residues 76–98 form a helical membrane-spanning segment; it reads LWALQLIFVSTPALLVAMHVAYY. Residues 99-131 lie on the Cytoplasmic side of the membrane; it reads RHEKKRKFIRGEIKTEFKDIEEIKKQKVRIEGS. The chain crosses the membrane as a helical span at residues 132 to 154; that stretch reads LWWTYTGSIFFRVIFEAAFMYVF. Residues 155 to 192 are Extracellular-facing; it reads YVMYDGFAMQRLVKCNAWPCPNTVDCFVSRPTEKTVFT. The chain crosses the membrane as a helical span at residues 193–215; that stretch reads VFMIAVSGICILLNVTELCYLLI. The Cytoplasmic segment spans residues 216–226; sequence RFCSGKSKKPV.

The protein belongs to the connexin family. As to quaternary structure, a connexon is composed of a hexamer of connexins. Interacts with CNST.

It is found in the cell membrane. The protein localises to the cell junction. It localises to the gap junction. Functionally, one gap junction consists of a cluster of closely packed pairs of transmembrane channels, the connexons, through which materials of low MW diffuse from one cell to a neighboring cell. This Bos taurus (Bovine) protein is Gap junction beta-2 protein (GJB2).